The following is a 351-amino-acid chain: MSKRGARTPGYWYDNTPIPLPARMLAPVYGAVTAVRRSLYRRGWLKRHGVPVPVVVIGNVTAGGTGKTPLTITLVSRLQQAGWTPGVASRGYGRDDAGTARWVDADTPVALGGDEPVLIAWKTGARVRVDTDRLAAARALVEAGCDIIVCDDGLQHYRLARDVEIEVVDGQRRYGNGRMLPAGPLREPAARARECDFRVVNLGQGSDAVIPVVGTPVADTDAGFGEWQMRLSIDSVQPMDGKRARPLASLAGQRVHAVAGIAHPERFFAMLRARGIGVVPHAFPDHHVYRAQDFSFGSRLPVLMTEKDAVKCRPFADEWLYSVPLKAELPAAFWVSLLDRLDKLASRHSDA.

ATP is bound at residue 61-68; sequence TAGGTGKT.

Belongs to the LpxK family.

The enzyme catalyses a lipid A disaccharide + ATP = a lipid IVA + ADP + H(+). It participates in glycolipid biosynthesis; lipid IV(A) biosynthesis; lipid IV(A) from (3R)-3-hydroxytetradecanoyl-[acyl-carrier-protein] and UDP-N-acetyl-alpha-D-glucosamine: step 6/6. Transfers the gamma-phosphate of ATP to the 4'-position of a tetraacyldisaccharide 1-phosphate intermediate (termed DS-1-P) to form tetraacyldisaccharide 1,4'-bis-phosphate (lipid IVA). This is Tetraacyldisaccharide 4'-kinase from Xanthomonas campestris pv. campestris (strain 8004).